A 184-amino-acid polypeptide reads, in one-letter code: Signal peptidase I S (184 aa).

The Cytoplasmic segment spans residues 1 to 18; that stretch reads MKSENVSKKKSILEWAKA. Residues 19–39 form a helical membrane-spanning segment; the sequence is IVIAVVLALLIRNFIFAPYVV. At 40–184 the chain is on the extracellular side; that stretch reads DGDSMYPTLH…YPFNEMRKTN (145 aa). Catalysis depends on residues Ser43 and Lys83.

It belongs to the peptidase S26 family.

The protein resides in the cell membrane. The enzyme catalyses Cleavage of hydrophobic, N-terminal signal or leader sequences from secreted and periplasmic proteins.. Functionally, not essential for cell viability, but required for efficient secretion of many proteins. The protein is Signal peptidase I S (sipS) of Bacillus subtilis (strain 168).